We begin with the raw amino-acid sequence, 256 residues long: Imidazole glycerol phosphate synthase subunit HisF (256 aa).

Catalysis depends on residues Asp12 and Asp131.

This sequence belongs to the HisA/HisF family. In terms of assembly, heterodimer of HisH and HisF.

It is found in the cytoplasm. The catalysed reaction is 5-[(5-phospho-1-deoxy-D-ribulos-1-ylimino)methylamino]-1-(5-phospho-beta-D-ribosyl)imidazole-4-carboxamide + L-glutamine = D-erythro-1-(imidazol-4-yl)glycerol 3-phosphate + 5-amino-1-(5-phospho-beta-D-ribosyl)imidazole-4-carboxamide + L-glutamate + H(+). The protein operates within amino-acid biosynthesis; L-histidine biosynthesis; L-histidine from 5-phospho-alpha-D-ribose 1-diphosphate: step 5/9. IGPS catalyzes the conversion of PRFAR and glutamine to IGP, AICAR and glutamate. The HisF subunit catalyzes the cyclization activity that produces IGP and AICAR from PRFAR using the ammonia provided by the HisH subunit. In Bifidobacterium longum (strain DJO10A), this protein is Imidazole glycerol phosphate synthase subunit HisF.